We begin with the raw amino-acid sequence, 166 residues long: 2-C-methyl-D-erythritol 2,4-cyclodiphosphate synthase (166 aa).

The a divalent metal cation site is built by D17 and H19. 4-CDP-2-C-methyl-D-erythritol 2-phosphate contacts are provided by residues 17–19 and 43–44; these read DSH and HS. Residue H51 participates in a divalent metal cation binding. Residues 65–67, 109–115, and R151 contribute to the 4-CDP-2-C-methyl-D-erythritol 2-phosphate site; these read DIG and AQKPKMA.

It belongs to the IspF family. Homotrimer. It depends on a divalent metal cation as a cofactor.

It catalyses the reaction 4-CDP-2-C-methyl-D-erythritol 2-phosphate = 2-C-methyl-D-erythritol 2,4-cyclic diphosphate + CMP. It participates in isoprenoid biosynthesis; isopentenyl diphosphate biosynthesis via DXP pathway; isopentenyl diphosphate from 1-deoxy-D-xylulose 5-phosphate: step 4/6. In terms of biological role, involved in the biosynthesis of isopentenyl diphosphate (IPP) and dimethylallyl diphosphate (DMAPP), two major building blocks of isoprenoid compounds. Catalyzes the conversion of 4-diphosphocytidyl-2-C-methyl-D-erythritol 2-phosphate (CDP-ME2P) to 2-C-methyl-D-erythritol 2,4-cyclodiphosphate (ME-CPP) with a corresponding release of cytidine 5-monophosphate (CMP). This chain is 2-C-methyl-D-erythritol 2,4-cyclodiphosphate synthase, found in Rhodopirellula baltica (strain DSM 10527 / NCIMB 13988 / SH1).